An 82-amino-acid chain; its full sequence is MVSIRLSRGGSKKRPFYHLTVTDSRKSRDGRFIERVGFFNPVARGQEERLRVESERLNYWLSQGAQCSERVAKLIKDAAAAA.

This sequence belongs to the bacterial ribosomal protein bS16 family.

This chain is Small ribosomal subunit protein bS16, found in Saccharophagus degradans (strain 2-40 / ATCC 43961 / DSM 17024).